Reading from the N-terminus, the 715-residue chain is Polyribonucleotide nucleotidyltransferase (715 aa).

Residues Asp491 and Asp497 each contribute to the Mg(2+) site. A KH domain is found at 558 to 617 (PKIMTMTINPEKIRDVIGPQGRVINKIIEETGVKIDIEQDGRVFIASINHEANLRAKQII). Residues 627–695 (GQVYLGTVKR…DQGRVNLSRK (69 aa)) enclose the S1 motif domain.

The protein belongs to the polyribonucleotide nucleotidyltransferase family. Mg(2+) serves as cofactor.

It localises to the cytoplasm. The enzyme catalyses RNA(n+1) + phosphate = RNA(n) + a ribonucleoside 5'-diphosphate. Functionally, involved in mRNA degradation. Catalyzes the phosphorolysis of single-stranded polyribonucleotides processively in the 3'- to 5'-direction. The chain is Polyribonucleotide nucleotidyltransferase from Brevibacillus brevis (strain 47 / JCM 6285 / NBRC 100599).